Here is a 160-residue protein sequence, read N- to C-terminus: E3 ubiquitin ligase complex SCF subunit sconC (160 aa).

Positions 101-160 are interaction with the F-box domain of F-box proteins; sequence ILAANYLDIKALLDVGCKTVANMIKGKSPEEIRKTFNIQNDFTPEEEDQIRRENEWAEDR.

It belongs to the SKP1 family. In terms of assembly, component of the SCF (SKP1-CUL1-F-box protein) E3 ubiquitin ligase complexes.

It participates in protein modification; protein ubiquitination. Functionally, essential component of the SCF (SKP1-CUL1-F-box protein) E3 ubiquitin ligase complexes, which mediate the ubiquitination and subsequent proteasomal degradation of target proteins. Controls sulfur metabolite repression, probably by mediating the inactivation or degradation of the metR transcription factor. This chain is E3 ubiquitin ligase complex SCF subunit sconC (sconC), found in Talaromyces stipitatus (strain ATCC 10500 / CBS 375.48 / QM 6759 / NRRL 1006) (Penicillium stipitatum).